Reading from the N-terminus, the 464-residue chain is Argininosuccinate lyase (464 aa).

It belongs to the lyase 1 family. Argininosuccinate lyase subfamily.

It localises to the cytoplasm. The enzyme catalyses 2-(N(omega)-L-arginino)succinate = fumarate + L-arginine. Its pathway is amino-acid biosynthesis; L-arginine biosynthesis; L-arginine from L-ornithine and carbamoyl phosphate: step 3/3. The chain is Argininosuccinate lyase from Pseudomonas putida (strain GB-1).